We begin with the raw amino-acid sequence, 187 residues long: Probable chorismate pyruvate-lyase (187 aa).

Residues Arg-80, Leu-117, and Glu-176 each contribute to the substrate site.

This sequence belongs to the UbiC family.

The protein resides in the cytoplasm. It catalyses the reaction chorismate = 4-hydroxybenzoate + pyruvate. It functions in the pathway cofactor biosynthesis; ubiquinone biosynthesis. Its function is as follows. Removes the pyruvyl group from chorismate, with concomitant aromatization of the ring, to provide 4-hydroxybenzoate (4HB) for the ubiquinone pathway. In Halorhodospira halophila (strain DSM 244 / SL1) (Ectothiorhodospira halophila (strain DSM 244 / SL1)), this protein is Probable chorismate pyruvate-lyase.